Here is a 311-residue protein sequence, read N- to C-terminus: Aquaporin-1 (311 aa).

The Cytoplasmic portion of the chain corresponds to 1-16 (MHPQVASLFDNVYEDL). The chain crosses the membrane as a helical span at residues 17–37 (AAATLEFIGTAFFLLFGLGGI). Residues 38–56 (QASTAEDTASSQPPASGIE) lie on the Extracellular side of the membrane. Residues 57–77 (HVLYISTCMGFSLVVSAWLFF) traverse the membrane as a helical segment. A topological domain (cytoplasmic) is located at residue arginine 78. A helical membrane pass occupies residues 79–99 (VTGGLFNPNISFALLLVGGLK). Residues 85–87 (NPN) carry the NPA 1 motif. Proline 100 is a topological domain (extracellular). A helical membrane pass occupies residues 101-121 (LRFVLFCIAQLTGAIAGAAIV). Over 122–143 (RGLTSAPLSVNNVLQQGTSAAQ) the chain is Cytoplasmic. A helical transmembrane segment spans residues 144–164 (GVFIEMFITAALVLSVLMLAA). At 165 to 168 (EKHE) the chain is on the extracellular side. Residues 169 to 189 (ATPFAPVGIGLTLFACHLFAV) traverse the membrane as a helical segment. Topologically, residues 190-215 (YYTGAAMNSARAFGPAVISGFPEPQH) are cytoplasmic. The NPA 2 signature appears at 197-199 (NSA). The helical transmembrane segment at 216-236 (WVYWVGPFLGSLLGAGFYATL) threads the bilayer. Over 237–311 (KHYKYWRLNP…TSSRTNFSPV (75 aa)) the chain is Extracellular. Residues 276–311 (DEETRNGCASNEEGVRATGDEKSSNATSSRTNFSPV) are disordered. The span at 288-298 (EGVRATGDEKS) shows a compositional bias: basic and acidic residues. Residues 299 to 311 (SNATSSRTNFSPV) show a composition bias toward polar residues. Asparagine 300 is a glycosylation site (N-linked (GlcNAc...) asparagine).

The protein belongs to the MIP/aquaporin (TC 1.A.8) family.

It localises to the cell membrane. It catalyses the reaction H2O(in) = H2O(out). The catalysed reaction is H2O2(out) = H2O2(in). It carries out the reaction nitric oxide(out) = nitric oxide(in). The enzyme catalyses CO2(out) = CO2(in). Water channel required to facilitate the transport of water across membranes. Also mediates the transport nitric oxide, hydrogen peroxide and carbon dioxide across the membrane. Required for Hartig net development in trembling aspen trees. Contributes in fungal cellular processes during the basidiocarp formation. This is Aquaporin-1 from Laccaria bicolor (Bicoloured deceiver).